We begin with the raw amino-acid sequence, 296 residues long: Acetylglutamate kinase (296 aa).

Substrate is bound by residues 67–68 (GG), Arg89, and Asn194.

Belongs to the acetylglutamate kinase family. ArgB subfamily.

The protein localises to the cytoplasm. The enzyme catalyses N-acetyl-L-glutamate + ATP = N-acetyl-L-glutamyl 5-phosphate + ADP. It participates in amino-acid biosynthesis; L-arginine biosynthesis; N(2)-acetyl-L-ornithine from L-glutamate: step 2/4. Catalyzes the ATP-dependent phosphorylation of N-acetyl-L-glutamate. This chain is Acetylglutamate kinase, found in Brucella anthropi (strain ATCC 49188 / DSM 6882 / CCUG 24695 / JCM 21032 / LMG 3331 / NBRC 15819 / NCTC 12168 / Alc 37) (Ochrobactrum anthropi).